The sequence spans 212 residues: Ribosomal RNA large subunit methyltransferase E (212 aa).

5 residues coordinate S-adenosyl-L-methionine: glycine 57, tryptophan 59, aspartate 77, aspartate 93, and aspartate 122. The active-site Proton acceptor is lysine 162.

It belongs to the class I-like SAM-binding methyltransferase superfamily. RNA methyltransferase RlmE family.

The protein localises to the cytoplasm. It carries out the reaction uridine(2552) in 23S rRNA + S-adenosyl-L-methionine = 2'-O-methyluridine(2552) in 23S rRNA + S-adenosyl-L-homocysteine + H(+). Functionally, specifically methylates the uridine in position 2552 of 23S rRNA at the 2'-O position of the ribose in the fully assembled 50S ribosomal subunit. The protein is Ribosomal RNA large subunit methyltransferase E of Coxiella burnetii (strain CbuK_Q154) (Coxiella burnetii (strain Q154)).